The sequence spans 376 residues: Inactive 2'-5'-oligoadenylate synthase 1B (376 aa).

Over 1-351 the chain is Cytoplasmic; that stretch reads MEQDLRSIPA…VPTEVGVPMK (351 aa). A helical; Anchor for type IV membrane protein transmembrane segment spans residues 352 to 370; it reads YLLCRIFWLLFWSLFHFIF. The Extracellular segment spans residues 371 to 376; it reads GKTSSG.

Belongs to the 2-5A synthase family. As to quaternary structure, interacts with OSBPL1A and ABCF3. As to expression, highly expressed in lung, spleen and thymus. Also detected at lower levels in heart, kidney, liver, lung, skeletal muscle, testes, uterus and ovaries.

Its subcellular location is the endoplasmic reticulum membrane. Does not have 2'-5'-OAS activity, but can bind double-stranded RNA. The full-length protein displays antiviral activity against flaviviruses such as west Nile virus (WNV) via an alternative antiviral pathway independent of RNase L. The truncated form of the protein lacks antiviral activity. The chain is Inactive 2'-5'-oligoadenylate synthase 1B (Oas1b) from Mus musculus (Mouse).